The sequence spans 221 residues: Small ribosomal subunit protein uS5 (221 aa).

Residues 46–109 form the S5 DRBM domain; it reads LKDEVINIER…DNAKLNIIEI (64 aa).

It belongs to the universal ribosomal protein uS5 family. In terms of assembly, part of the 30S ribosomal subunit. Contacts protein S4.

Functionally, with S4 and S12 plays an important role in translational accuracy. In Picrophilus torridus (strain ATCC 700027 / DSM 9790 / JCM 10055 / NBRC 100828 / KAW 2/3), this protein is Small ribosomal subunit protein uS5.